Reading from the N-terminus, the 387-residue chain is Patatin group A-2 (387 aa).

The N-terminal stretch at 1-23 (MATTKSFLILIVMILATTSSTFA) is a signal peptide. The 199-residue stretch at 32 to 230 (LSIDGGGIKG…TVADPALLSV (199 aa)) folds into the PNPLA domain. The GXGXXG motif lies at 36 to 41 (GGGIKG). The short motif at 75–79 (GTSTG) is the GXSXG element. Serine 77 functions as the Nucleophile in the catalytic mechanism. An N-linked (GlcNAc...) asparagine glycan is attached at asparagine 115. The Proton acceptor role is filled by aspartate 216. The short motif at 216 to 218 (DGA) is the DGA/G element. A coiled-coil region spans residues 361 to 385 (ETYEEALKRFAKLLSDRKKLRANKA).

This sequence belongs to the patatin family. In terms of tissue distribution, tuber and stolon.

It is found in the vacuole. Functionally, probable lipolytic acyl hydrolase (LAH), an activity which is thought to be involved in the response of tubers to pathogens. The protein is Patatin group A-2 of Solanum tuberosum (Potato).